A 149-amino-acid chain; its full sequence is Macrodomain Ter protein (149 aa).

It belongs to the MatP family. As to quaternary structure, homodimer.

It localises to the cytoplasm. In terms of biological role, required for spatial organization of the terminus region of the chromosome (Ter macrodomain) during the cell cycle. Prevents early segregation of duplicated Ter macrodomains during cell division. Binds specifically to matS, which is a 13 bp signature motif repeated within the Ter macrodomain. The sequence is that of Macrodomain Ter protein from Vibrio parahaemolyticus serotype O3:K6 (strain RIMD 2210633).